We begin with the raw amino-acid sequence, 255 residues long: MVKIFIDPGHGGSDPGATGNGLQEKTLTLQIALALRTILTNEYEGVSLLLSRTSDQYVSLNDRTNAANNWGADFFLSIHVNSGGGTGFESYIYPDVGAPTTTYQSTIHSEVIQAVDFADRGKKTANFHVLRESAMPALLTENGFIDTVSDANKLKTSSFIQSLARGHANGLEQAFNLKKTSSSGLYKVQIGAFKVKANADSLASNAEAKGFDSIVLLKDGLYKVQIGAFSSKDNADTLAARAKNAGFDAIVILES.

Residues 4–172 form the MurNAc-LAA domain; sequence IFIDPGHGGS…LARGHANGLE (169 aa). Zn(2+) contacts are provided by H10, E24, and H79. Residue E141 is part of the active site. The SPOR domain occupies 180-254; sequence TSSSGLYKVQ…AGFDAIVILE (75 aa). Tandem repeats lie at residues 184–219 and 220–255. A 2 X 35 AA approximate tandem repeats region spans residues 184-255; the sequence is GLYKVQIGAF…GFDAIVILES (72 aa).

The protein belongs to the N-acetylmuramoyl-L-alanine amidase 3 family. The cofactor is Zn(2+).

It localises to the secreted. The protein localises to the cell wall. The enzyme catalyses Hydrolyzes the link between N-acetylmuramoyl residues and L-amino acid residues in certain cell-wall glycopeptides.. With respect to regulation, inhibited by EDTA. Autolysins are involved in some important biological processes such as cell separation, cell-wall turnover, competence for genetic transformation, formation of the flagella - in particular of its basal body - and sporulation. CwlC is able to hydrolyze type A cell walls such as B.subtilis. Its main function is to lyze the mother cell wall peptidoglycan, playing a role during sporulation. The chain is Sporulation-specific N-acetylmuramoyl-L-alanine amidase (cwlC) from Bacillus subtilis (strain 168).